A 573-amino-acid chain; its full sequence is ATP-dependent RNA helicase RhlB (573 aa).

The Q motif motif lies at 9-37 (VTFSSFDLHPALIAGLESAGFTRCTPIQA). The 181-residue stretch at 40–220 (LPVALPGGDV…YEHMNEPEKL (181 aa)) folds into the Helicase ATP-binding domain. Position 53-60 (53-60 (AQTGTGKT)) interacts with ATP. A DEAD box motif is present at residues 166–169 (DEAD). In terms of domain architecture, Helicase C-terminal spans 231–393 (RVRQRIYFPS…PVTSELLTPL (163 aa)). A disordered region spans residues 391 to 560 (TPLPRAPRVP…KPSGSPSLLS (170 aa)). Over residues 402-411 (EGEEADDDAG) the composition is skewed to acidic residues. Basic and acidic residues predominate over residues 419 to 432 (REAREQRAAEEQRR). Residues 435 to 450 (GRSGSGGSRSGSGGGG) are compositionally biased toward gly residues. Residues 451 to 462 (GRREGAGADGKP) are compositionally biased toward basic and acidic residues. Residues 484–499 (PVVAAAAGQAPSAGVA) are compositionally biased toward low complexity. Basic residues predominate over residues 505–514 (PRKRRRRRNG). Positions 541–560 (VVAKPVRAAAKPSGSPSLLS) are enriched in low complexity.

It belongs to the DEAD box helicase family. RhlB subfamily. Component of the RNA degradosome, which is a multiprotein complex involved in RNA processing and mRNA degradation.

The protein resides in the cytoplasm. It carries out the reaction ATP + H2O = ADP + phosphate + H(+). Functionally, DEAD-box RNA helicase involved in RNA degradation. Has RNA-dependent ATPase activity and unwinds double-stranded RNA. The sequence is that of ATP-dependent RNA helicase RhlB from Xanthomonas euvesicatoria pv. vesicatoria (strain 85-10) (Xanthomonas campestris pv. vesicatoria).